A 158-amino-acid chain; its full sequence is Protein FAM177B (158 aa).

A compositionally biased stretch (acidic residues) spans Glu36–Glu48. The disordered stretch occupies residues Glu36 to Ser59.

The protein belongs to the FAM177 family.

The protein is Protein FAM177B (FAM177B) of Homo sapiens (Human).